Here is a 311-residue protein sequence, read N- to C-terminus: MALPIIIDCDPGHDDAIALVLALASPELEVKAITSSAGNQTPEKTLRNVLRMLTLLKRPDIPVAGGAVKPLMRELIIADNVHGESGLDGPALPEPSFAPQSGTAVELMAKTLRESAQPVTIVSTGPQTNVALLLNSHPELHTKIARIVIMGGAMALGNWTPAAEFNIYVDPEAAEIVFQSGIPVVMAGLDVTHKAQIHAADIERFRDIGNPISTIVAELLDFFFEYHKDEKWGFVGAPLHDPCTIAWLLKPEIFTTVERWVGVETQGKYTQGMTVVDYYFLTGNKPNATVMVDVDRQGFVDLLAERLQYYA.

The active site involves H240.

Belongs to the IUNH family. RihA subfamily.

Hydrolyzes cytidine or uridine to ribose and cytosine or uracil, respectively. The protein is Pyrimidine-specific ribonucleoside hydrolase RihA of Salmonella paratyphi B (strain ATCC BAA-1250 / SPB7).